The primary structure comprises 394 residues: Flavohemoprotein (394 aa).

The region spanning Met-1–Glu-136 is the Globin domain. His-85 is a binding site for heme b. Catalysis depends on charge relay system residues Tyr-95 and Glu-135. Positions Gly-147–Leu-394 are reductase. One can recognise an FAD-binding FR-type domain in the interval Arg-150 to Asp-255. Residues Tyr-188 and Arg-204–Ser-207 each bind FAD. Gly-268 to Pro-273 serves as a coordination point for NADP(+). Cys-387–Pro-390 contributes to the FAD binding site.

The protein belongs to the globin family. Two-domain flavohemoproteins subfamily. In the C-terminal section; belongs to the flavoprotein pyridine nucleotide cytochrome reductase family. The cofactor is heme b. Requires FAD as cofactor.

The enzyme catalyses 2 nitric oxide + NADPH + 2 O2 = 2 nitrate + NADP(+) + H(+). It catalyses the reaction 2 nitric oxide + NADH + 2 O2 = 2 nitrate + NAD(+) + H(+). Its function is as follows. Is involved in NO detoxification in an aerobic process, termed nitric oxide dioxygenase (NOD) reaction that utilizes O(2) and NAD(P)H to convert NO to nitrate, which protects the bacterium from various noxious nitrogen compounds. Therefore, plays a central role in the inducible response to nitrosative stress. The polypeptide is Flavohemoprotein (Photobacterium profundum (strain SS9)).